The primary structure comprises 135 residues: MACGLVASNLNLKPGECLRVRGEVAADAKSFSLNLGKDDNNLCLHFNPRFNAHGDINTIVCNSKDGGAWGAEQRETAFPFQPGSVAEVCISFNQTDLTIKLPDGYEFKFPNRLNLEAINYLSAGGDFKIKCVAFE.

Ala2 carries the post-translational modification N-acetylalanine. One can recognise a Galectin domain in the interval 4 to 135 (GLVASNLNLK…DFKIKCVAFE (132 aa)). Lys13 and Lys29 each carry N6-acetyllysine. Ser30 carries the post-translational modification Phosphoserine. A beta-D-galactoside contacts are provided by residues 45 to 49 (HFNPR), His53, Asn62, and 69 to 72 (WGAE). Lys108 is subject to N6-acetyllysine; alternate. Lys108 bears the N6-succinyllysine; alternate mark. Position 128 is an N6-acetyllysine (Lys128).

In terms of assembly, homodimer. Binds LGALS3BP. Interacts with CD2, CD3, CD4, CD6, CD7, CD43, ALCAM and CD45. Interacts with laminin (via poly-N-acetyllactosamine). Interacts with SUSD2. Interacts with cargo receptor TMED10; the interaction mediates the translocation from the cytoplasm into the ERGIC (endoplasmic reticulum-Golgi intermediate compartment) and thereby secretion.

It localises to the secreted. The protein resides in the extracellular space. The protein localises to the extracellular matrix. Its subcellular location is the cytoplasm. Functionally, lectin that binds beta-galactoside and a wide array of complex carbohydrates. Plays a role in regulating apoptosis, cell proliferation and cell differentiation. Inhibits CD45 protein phosphatase activity and therefore the dephosphorylation of Lyn kinase. Strong inducer of T-cell apoptosis. The sequence is that of Galectin-1 (LGALS1) from Ovis aries (Sheep).